Consider the following 391-residue polypeptide: Na(+)/H(+) antiporter NhaA (391 aa).

Transmembrane regions (helical) follow at residues 14–34 (GGII…LGAT), 59–79 (MLLW…GLEV), 95–115 (AFPV…YLAF), 125–145 (GWAI…ALLG), 154–174 (IFLM…IALF), 180–200 (SILS…LNIF), 219–239 (VLKS…FIPL), 254–274 (VLHP…NAGV), 292–312 (IIAG…WLAL), 328–348 (IMAV…ISTL), and 357–377 (LIVW…FVGY).

The protein belongs to the NhaA Na(+)/H(+) (TC 2.A.33) antiporter family.

Its subcellular location is the cell inner membrane. The catalysed reaction is Na(+)(in) + 2 H(+)(out) = Na(+)(out) + 2 H(+)(in). Its function is as follows. Na(+)/H(+) antiporter that extrudes sodium in exchange for external protons. The polypeptide is Na(+)/H(+) antiporter NhaA (Enterobacter sp. (strain 638)).